Consider the following 132-residue polypeptide: MSTHDPISDLITRIRNAQMRSKPKVSTPGSKMRANVLEVLKSEGYIRGYASVEHSSGRSELEIELKYFDGEPVIREIERVSRPGRRVYASVKNLPRVNNGLGISVLSTPKGIMADHEARDANVGGEVLFTVF.

Belongs to the universal ribosomal protein uS8 family. Part of the 30S ribosomal subunit. Contacts proteins S5 and S12.

One of the primary rRNA binding proteins, it binds directly to 16S rRNA central domain where it helps coordinate assembly of the platform of the 30S subunit. This Nitrobacter winogradskyi (strain ATCC 25391 / DSM 10237 / CIP 104748 / NCIMB 11846 / Nb-255) protein is Small ribosomal subunit protein uS8.